A 264-amino-acid polypeptide reads, in one-letter code: ATP synthase subunit a (264 aa).

Transmembrane regions (helical) follow at residues 29 to 49 (TWHIDSLLFSVGLGVLFLWIF), 90 to 110 (IAPLALTIFVWVFMMNFMDMI), 111 to 131 (PVDWLPSLALLAGVEYLKVVP), 134 to 154 (DVNITFSLAIGVFVLIIYYSI), 177 to 197 (IPVNLLLESVTLIAKPISLAL), 208 to 228 (LIFILIALMYSANWAMATLGV), and 235 to 255 (LIFHILVITLQAFIFMMLTIV).

The protein belongs to the ATPase A chain family. In terms of assembly, F-type ATPases have 2 components, CF(1) - the catalytic core - and CF(0) - the membrane proton channel. CF(1) has five subunits: alpha(3), beta(3), gamma(1), delta(1), epsilon(1). CF(0) has three main subunits: a(1), b(2) and c(9-12). The alpha and beta chains form an alternating ring which encloses part of the gamma chain. CF(1) is attached to CF(0) by a central stalk formed by the gamma and epsilon chains, while a peripheral stalk is formed by the delta and b chains.

Its subcellular location is the cell inner membrane. Functionally, key component of the proton channel; it plays a direct role in the translocation of protons across the membrane. This is ATP synthase subunit a from Shewanella denitrificans (strain OS217 / ATCC BAA-1090 / DSM 15013).